The primary structure comprises 990 residues: Envelope glycoprotein gp160 (990 aa).

Positions 1-107 (MASSKNMPSR…CLIWEMGKKH (107 aa)) are cleaved as a signal peptide. Residues 108–838 (SCNAEEVIAL…WSGWFSWLKY (731 aa)) lie on the Extracellular side of the membrane. N-linked (GlcNAc...) asparagine; by host glycosylation is found at asparagine 141, asparagine 162, asparagine 207, asparagine 259, asparagine 299, asparagine 363, asparagine 386, asparagine 402, asparagine 413, asparagine 434, asparagine 438, asparagine 469, asparagine 474, asparagine 480, asparagine 490, asparagine 500, asparagine 514, asparagine 526, asparagine 536, asparagine 542, asparagine 550, asparagine 560, and asparagine 567. The segment at 663–683 (GIGLVIVLAIMAIIAAAGAGL) is fusion peptide. Residues 695 to 745 (RTAVQSLANATAAQQNVLEATYAMVQHVAKGVRILEARVARVEAIVDRMML) adopt a coiled-coil conformation. N-linked (GlcNAc...) asparagine; by host glycosylation is present at asparagine 703. The segment at 729–745 (LEARVARVEAIVDRMML) is immunosuppression. Residues asparagine 771, asparagine 778, and asparagine 794 are each glycosylated (N-linked (GlcNAc...) asparagine; by host). A coiled-coil region spans residues 786 to 821 (EEIEQHEANLSLLLKEAALQVQIAQRDAQRIPDVWK). The chain crosses the membrane as a helical span at residues 839 to 859 (IPWIVVCIVGVICFRLLMCVI). The Cytoplasmic segment spans residues 860 to 990 (TMCLQAYRQV…AIENEYVELS (131 aa)). The S-palmitoyl cysteine; by host moiety is linked to residue cysteine 862. The interval 890–909 (KQREERDGSSGSENLEHEKR) is disordered.

As to quaternary structure, the mature envelope protein (Env) consists of a trimer of SU-TM heterodimers attached by noncovalent interactions or by a labile interchain disulfide bond. In terms of processing, specific enzymatic cleavages in vivo yield mature proteins. Envelope glycoproteins are synthesized as an inactive precursor that is N-glycosylated and processed likely by host cell furin or by a furin-like protease in the Golgi to yield the mature SU and TM proteins. The cleavage site between SU and TM requires the minimal sequence [KR]-X-[KR]-R. Post-translationally, the transmembrane protein is palmitoylated.

The protein resides in the virion membrane. Its subcellular location is the host cell membrane. Functionally, the surface protein (SU) attaches the virus to the host cell by binding to its receptor. This interaction triggers the refolding of the transmembrane protein (TM) and is thought to activate its fusogenic potential by unmasking its fusion peptide. Fusion occurs at the host cell plasma membrane. Its function is as follows. The transmembrane protein (TM) acts as a class I viral fusion protein. Under the current model, the protein has at least 3 conformational states: pre-fusion native state, pre-hairpin intermediate state, and post-fusion hairpin state. During viral and target cell membrane fusion, the coiled coil regions (heptad repeats) assume a trimer-of-hairpins structure, positioning the fusion peptide in close proximity to the C-terminal region of the ectodomain. The formation of this structure appears to drive apposition and subsequent fusion of viral and target cell membranes. Membranes fusion leads to delivery of the nucleocapsid into the cytoplasm. The chain is Envelope glycoprotein gp160 (env) from Ovine maedi visna related virus (strain South Africa) (SA-OMVV).